Consider the following 311-residue polypeptide: 4-hydroxyproline 2-epimerase (311 aa).

Cysteine 89 serves as the catalytic Proton acceptor. Residues glycine 90 to histidine 91, histidine 209, and aspartate 233 each bind substrate. Cysteine 237 (proton donor) is an active-site residue. Residue glycine 238–threonine 239 participates in substrate binding.

It belongs to the proline racemase family.

The enzyme catalyses trans-4-hydroxy-L-proline = cis-4-hydroxy-D-proline. Catalyzes the epimerization of trans-4-hydroxy-L-proline (t4LHyp) to cis-4-hydroxy-D-proline (c4DHyp). Is likely involved in a degradation pathway that converts t4LHyp to alpha-ketoglutarate. Displays no proline racemase activity. The chain is 4-hydroxyproline 2-epimerase from Burkholderia ambifaria (strain ATCC BAA-244 / DSM 16087 / CCUG 44356 / LMG 19182 / AMMD) (Burkholderia cepacia (strain AMMD)).